The sequence spans 674 residues: Zinc finger protein 750 (674 aa).

The segment at 25-51 (YKCFQCPFTCNEKSHLFNHMKYGLCKN) adopts a CCHC-type zinc-finger fold. Positions 27, 30, 43, and 49 each coordinate Zn(2+). 3 disordered regions span residues 105-125 (EAKE…KTTV), 370-466 (LAKN…QSHS), and 594-674 (TSSP…PRVS). Polar residues-rich tracts occupy residues 401–411 (SPTNFTQSSQG) and 444–466 (DSQT…QSHS).

It is found in the nucleus. Its function is as follows. Transcription factor involved in epidermis differentiation. In Xenopus laevis (African clawed frog), this protein is Zinc finger protein 750 (znf750).